The sequence spans 696 residues: Gametogenetin-binding protein 2 (696 aa).

Phosphoserine is present on Ser-360.

As to quaternary structure, interacts with GGN.

It localises to the cytoplasmic vesicle. Its function is as follows. May be involved in spermatogenesis. The sequence is that of Gametogenetin-binding protein 2 (Ggnbp2) from Rattus norvegicus (Rat).